We begin with the raw amino-acid sequence, 430 residues long: Bystin (430 aa).

2 stretches are compositionally biased toward basic residues: residues 1 to 12 and 26 to 35; these read MGKDKKDRKHKG and PSKRVKHRRE. Disordered regions lie at residues 1–45 and 65–113; these read MGKD…ESFV and MEEY…SETY. The segment covering 68–78 has biased composition (basic and acidic residues); it reads YGFRKTGDRKT. Residues 93–104 are compositionally biased toward acidic residues; sequence RIDDDDEDDSDD.

It belongs to the bystin family.

The protein resides in the nucleus. The protein localises to the nucleolus. Its function is as follows. Required for processing of 20S pre-rRNA precursor and biogenesis of 40S ribosomal subunits. The chain is Bystin (bysl) from Nematostella vectensis (Starlet sea anemone).